A 359-amino-acid chain; its full sequence is Probable C-C chemokine receptor type 3 (359 aa).

The Extracellular portion of the chain corresponds to 1 to 38 (MAFNTDEIKTVVESFETTPYEYEWAPPCEKVRIKELGS). The helical transmembrane segment at 39 to 64 (WLLPPLYSLVFIIGLLGNMMVVLILI) threads the bilayer. Residues 65–68 (KYRK) lie on the Cytoplasmic side of the membrane. A helical membrane pass occupies residues 69-95 (LQIMTNIYLFNLAISDLLFLFTVPFWI). Residues 96–111 (HYVLWNEWGFGHYMCK) are Extracellular-facing. C110 and C187 are oxidised to a cystine. A helical transmembrane segment spans residues 112–133 (MLSGFYYLALYSEIFFIILLTI). At 134–150 (DRYLAIVHAVFALRART) the chain is on the cytoplasmic side. Residues 151–175 (VTFATITSIITWGLAGLAALPEFIF) traverse the membrane as a helical segment. Over 176 to 201 (HESQDSFGEFSCSPRYPEGEEDSWKR) the chain is Extracellular. The chain crosses the membrane as a helical span at residues 202-227 (FHALRMNIFGLALPLLIMVICYSGII). Over 228–243 (KTLLRCPNKKKHKAIR) the chain is Cytoplasmic. The chain crosses the membrane as a helical span at residues 244–268 (LIFVVMIVFFIFWTPYNLVLLFSAF). Residues 269–285 (HSTFLETSCQQSKHLDL) lie on the Extracellular side of the membrane. A helical membrane pass occupies residues 286–309 (AMQVTEVIAYTHCCINPVIYAFVG). Residues 310 to 359 (ERFRKHLRLFFHRNVAVYLGKYIPFLPGEKMERTSSVSPSTGEQEISVVF) lie on the Cytoplasmic side of the membrane.

This sequence belongs to the G-protein coupled receptor 1 family. As to expression, detected in skeletal muscle and in trace amounts in leukocytes.

It localises to the cell membrane. Functionally, receptor for C-C type chemokine. Binds and responds to a variety of chemokines, including CCL11, CCL26, CCL7, CCL13, RANTES(CCL5) and CCL15. Subsequently transduces a signal by increasing the intracellular calcium ions level. In addition acts as a possible functional receptor for NARS1. The protein is Probable C-C chemokine receptor type 3 (Ccr3) of Mus musculus (Mouse).